Consider the following 635-residue polypeptide: DNA primase (635 aa).

The CHC2-type zinc finger occupies 41–65; sequence CPFHDEKSPSFSVSPAKQMYYCFGC. The Toprim domain occupies 265-348; the sequence is DEAILVEGYF…SGQVNLRILN (84 aa). Mg(2+) is bound by residues E271, D317, and D319.

This sequence belongs to the DnaG primase family. As to quaternary structure, monomer. Interacts with DnaB. The cofactor is Zn(2+). Requires Mg(2+) as cofactor.

The catalysed reaction is ssDNA + n NTP = ssDNA/pppN(pN)n-1 hybrid + (n-1) diphosphate.. Its function is as follows. RNA polymerase that catalyzes the synthesis of short RNA molecules used as primers for DNA polymerase during DNA replication. This is DNA primase from Synechocystis sp. (strain ATCC 27184 / PCC 6803 / Kazusa).